The following is a 462-amino-acid chain: Cysteine--tRNA ligase (462 aa).

Cys30 is a Zn(2+) binding site. The 'HIGH' region motif lies at 32–42 (MTVYDYCHVGH). Zn(2+)-binding residues include Cys214, His239, and Glu243. A 'KMSKS' region motif is present at residues 271–275 (KMSKS). Lys274 contacts ATP.

Belongs to the class-I aminoacyl-tRNA synthetase family. As to quaternary structure, monomer. Zn(2+) is required as a cofactor.

Its subcellular location is the cytoplasm. It carries out the reaction tRNA(Cys) + L-cysteine + ATP = L-cysteinyl-tRNA(Cys) + AMP + diphosphate. The polypeptide is Cysteine--tRNA ligase (Cupriavidus taiwanensis (strain DSM 17343 / BCRC 17206 / CCUG 44338 / CIP 107171 / LMG 19424 / R1) (Ralstonia taiwanensis (strain LMG 19424))).